Here is a 238-residue protein sequence, read N- to C-terminus: DNA repair protein RecO (238 aa).

This sequence belongs to the RecO family.

Its function is as follows. Involved in DNA repair and RecF pathway recombination. This is DNA repair protein RecO from Flavobacterium psychrophilum (strain ATCC 49511 / DSM 21280 / CIP 103535 / JIP02/86).